The following is a 142-amino-acid chain: Putative pre-16S rRNA nuclease (142 aa).

Belongs to the YqgF nuclease family.

It localises to the cytoplasm. In terms of biological role, could be a nuclease involved in processing of the 5'-end of pre-16S rRNA. The chain is Putative pre-16S rRNA nuclease from Shouchella clausii (strain KSM-K16) (Alkalihalobacillus clausii).